The following is a 233-amino-acid chain: Uracil-DNA glycosylase (233 aa).

D70 functions as the Proton acceptor in the catalytic mechanism.

The protein belongs to the uracil-DNA glycosylase (UDG) superfamily. UNG family.

The protein resides in the cytoplasm. The catalysed reaction is Hydrolyzes single-stranded DNA or mismatched double-stranded DNA and polynucleotides, releasing free uracil.. Excises uracil residues from the DNA which can arise as a result of misincorporation of dUMP residues by DNA polymerase or due to deamination of cytosine. In Helicobacter pylori (strain HPAG1), this protein is Uracil-DNA glycosylase.